A 274-amino-acid chain; its full sequence is Ethanolamine ammonia-lyase small subunit (274 aa).

3 residues coordinate adenosylcob(III)alamin: Val161, Glu182, and Cys211.

It belongs to the EutC family. The basic unit is a heterodimer which dimerizes to form tetramers. The heterotetramers trimerize; 6 large subunits form a core ring with 6 small subunits projecting outwards. Requires adenosylcob(III)alamin as cofactor.

It is found in the bacterial microcompartment. The catalysed reaction is ethanolamine = acetaldehyde + NH4(+). The protein operates within amine and polyamine degradation; ethanolamine degradation. Functionally, catalyzes the deamination of various vicinal amino-alcohols to oxo compounds. Allows this organism to utilize ethanolamine as the sole source of nitrogen and carbon in the presence of external vitamin B12. The chain is Ethanolamine ammonia-lyase small subunit from Pseudomonas fluorescens (strain Pf0-1).